Reading from the N-terminus, the 422-residue chain is Histidine--tRNA ligase (422 aa).

The protein belongs to the class-II aminoacyl-tRNA synthetase family. In terms of assembly, homodimer.

The protein localises to the cytoplasm. The enzyme catalyses tRNA(His) + L-histidine + ATP = L-histidyl-tRNA(His) + AMP + diphosphate + H(+). This chain is Histidine--tRNA ligase, found in Vibrio cholerae serotype O1 (strain ATCC 39541 / Classical Ogawa 395 / O395).